We begin with the raw amino-acid sequence, 165 residues long: uncharacterized protein (165 aa).

The helical transmembrane segment at 10–27 (VSLTIVFVLFFSADVSLT) threads the bilayer.

It localises to the membrane. This is an uncharacterized protein from Saccharomyces cerevisiae (strain ATCC 204508 / S288c) (Baker's yeast).